Here is a 239-residue protein sequence, read N- to C-terminus: Cysteine-rich venom protein kaouthin-1 (239 aa).

Positions 1–18 (MIAFSLLCLAAVLRQSFG) are cleaved as a signal peptide. An SCP domain is found at 37–165 (VDLHNSLRRR…AWSYFYVCQY (129 aa)). 8 disulfide bridges follow: C74/C152, C91/C166, C147/C163, C185/C192, C188/C197, C201/C234, C210/C228, and C219/C232. Residues 201-234 (CTIYNKLTNCDSLLKQGSCQDDWIKSNCPASCFC) enclose the ShKT domain.

It belongs to the CRISP family. In terms of tissue distribution, expressed by the venom gland.

It is found in the secreted. Its function is as follows. Inhibits calcium-activated potassium channels (KCa), voltage-gated potassium channel (Kv), and the calcium release channel/ryanodine receptor (RyR). This is Cysteine-rich venom protein kaouthin-1 from Naja kaouthia (Monocled cobra).